The chain runs to 149 residues: Large ribosomal subunit protein bL9 (149 aa).

The protein belongs to the bacterial ribosomal protein bL9 family.

In terms of biological role, binds to the 23S rRNA. The sequence is that of Large ribosomal subunit protein bL9 from Clostridioides difficile (strain 630) (Peptoclostridium difficile).